We begin with the raw amino-acid sequence, 303 residues long: Pseudouridine-5'-phosphate glycosidase (303 aa).

Glu-26 (proton donor) is an active-site residue. 2 residues coordinate substrate: Lys-87 and Val-107. Asp-139 contributes to the Mn(2+) binding site. A substrate-binding site is contributed by 141 to 143; sequence SAD. The active-site Nucleophile is the Lys-160.

This sequence belongs to the pseudouridine-5'-phosphate glycosidase family. Homotrimer. Mn(2+) serves as cofactor.

It catalyses the reaction D-ribose 5-phosphate + uracil = psi-UMP + H2O. Catalyzes the reversible cleavage of pseudouridine 5'-phosphate (PsiMP) to ribose 5-phosphate and uracil. Functions biologically in the cleavage direction, as part of a pseudouridine degradation pathway. This is Pseudouridine-5'-phosphate glycosidase from Saccharopolyspora erythraea (strain ATCC 11635 / DSM 40517 / JCM 4748 / NBRC 13426 / NCIMB 8594 / NRRL 2338).